The following is a 179-amino-acid chain: Large ribosomal subunit protein uL5 (179 aa).

Belongs to the universal ribosomal protein uL5 family. As to quaternary structure, part of the 50S ribosomal subunit; part of the 5S rRNA/L5/L18/L25 subcomplex. Contacts the 5S rRNA and the P site tRNA. Forms a bridge to the 30S subunit in the 70S ribosome.

In terms of biological role, this is one of the proteins that bind and probably mediate the attachment of the 5S RNA into the large ribosomal subunit, where it forms part of the central protuberance. In the 70S ribosome it contacts protein S13 of the 30S subunit (bridge B1b), connecting the 2 subunits; this bridge is implicated in subunit movement. Contacts the P site tRNA; the 5S rRNA and some of its associated proteins might help stabilize positioning of ribosome-bound tRNAs. This chain is Large ribosomal subunit protein uL5, found in Chromohalobacter salexigens (strain ATCC BAA-138 / DSM 3043 / CIP 106854 / NCIMB 13768 / 1H11).